Here is a 177-residue protein sequence, read N- to C-terminus: Bifunctional protein PyrR (177 aa).

The PRPP-binding signature appears at 99 to 111 (VILIDDVLYTGRT).

This sequence belongs to the purine/pyrimidine phosphoribosyltransferase family. PyrR subfamily. In terms of assembly, homodimer and homohexamer; in equilibrium.

The catalysed reaction is UMP + diphosphate = 5-phospho-alpha-D-ribose 1-diphosphate + uracil. Functionally, regulates transcriptional attenuation of the pyrimidine nucleotide (pyr) operon by binding in a uridine-dependent manner to specific sites on pyr mRNA. This disrupts an antiterminator hairpin in the RNA and favors formation of a downstream transcription terminator, leading to a reduced expression of downstream genes. Its function is as follows. Also displays a weak uracil phosphoribosyltransferase activity which is not physiologically significant. This chain is Bifunctional protein PyrR, found in Pediococcus pentosaceus (strain ATCC 25745 / CCUG 21536 / LMG 10740 / 183-1w).